Consider the following 263-residue polypeptide: Small ribosomal subunit protein uS3 (263 aa).

In terms of domain architecture, KH type-2 spans I40–E108. The tract at residues K224 to E263 is disordered. Over residues K239–N248 the composition is skewed to basic and acidic residues. The segment covering K249–E263 has biased composition (low complexity).

This sequence belongs to the universal ribosomal protein uS3 family. In terms of assembly, part of the 30S ribosomal subunit. Forms a tight complex with proteins S10 and S14.

In terms of biological role, binds the lower part of the 30S subunit head. Binds mRNA in the 70S ribosome, positioning it for translation. This Mycoplasmoides gallisepticum (strain R(low / passage 15 / clone 2)) (Mycoplasma gallisepticum) protein is Small ribosomal subunit protein uS3.